A 249-amino-acid polypeptide reads, in one-letter code: Homeobox protein TGIF2LX (249 aa).

2 disordered regions span residues M1–G62 and D126–V192. The segment covering A9–P27 has biased composition (basic and acidic residues). The span at A28–D46 shows a compositional bias: polar residues. The homeobox; TALE-type DNA-binding region spans E55–D118. Residues D159 to G172 show a composition bias toward polar residues.

Belongs to the TALE/TGIF homeobox family.

It localises to the nucleus. Functionally, may have a transcription role in testis. The chain is Homeobox protein TGIF2LX (TGIF2LX) from Macaca fascicularis (Crab-eating macaque).